Reading from the N-terminus, the 101-residue chain is Small ribosomal subunit protein uS14 (101 aa).

The tract at residues 53 to 72 is disordered; it reads RDAAAVRVRNRDSHDGRPRG. The span at 61 to 70 shows a compositional bias: basic and acidic residues; that stretch reads RNRDSHDGRP.

The protein belongs to the universal ribosomal protein uS14 family. Part of the 30S ribosomal subunit. Contacts proteins S3 and S10.

Binds 16S rRNA, required for the assembly of 30S particles and may also be responsible for determining the conformation of the 16S rRNA at the A site. The sequence is that of Small ribosomal subunit protein uS14 from Corynebacterium glutamicum (strain ATCC 13032 / DSM 20300 / JCM 1318 / BCRC 11384 / CCUG 27702 / LMG 3730 / NBRC 12168 / NCIMB 10025 / NRRL B-2784 / 534).